A 450-amino-acid chain; its full sequence is 6-phospho-beta-glucosidase (450 aa).

5 to 73 (LKVVTIGGGS…VPMKLYKTLD (69 aa)) is a binding site for NAD(+). The substrate site is built by Arg96 and Asn150. Residues Cys172 and His203 each contribute to the Mn(2+) site. Tyr258 serves as the catalytic Proton acceptor.

Homotetramer. NAD(+) serves as cofactor. The cofactor is Mn(2+). Requires Co(2+) as cofactor. It depends on Ni(2+) as a cofactor.

It catalyses the reaction 6-phospho-beta-D-glucosyl-(1-&gt;4)-D-glucose + H2O = D-glucose 6-phosphate + D-glucose. In terms of biological role, hydrolyzes a wide variety of P-beta-glucosides including cellobiose-6P, salicin-6P, arbutin-6P, gentiobiose-6P, methyl-beta-glucoside-6P and p-nitrophenyl-beta-D-glucopyranoside-6P. Is also able to hydrolyze phospho-N,N'-diacetylchitobiose. This chain is 6-phospho-beta-glucosidase (chbF), found in Escherichia coli (strain K12).